The sequence spans 165 residues: MRILGVDPGYGIVGIGIIEVSGNRISHVFHGTIETPKDLPAEKRLKRIYEEFLKVLERFSPDECAMEKLFFVKNVTTAIGVGEARGVLLLALAEKNIPVFEYAPNEVKVSLSGYGRASKKQIQENIKRFLNLSEIPRPDDAADALAIAWCHALQSRARRVTHGEN.

Residues D7, E67, and D140 contribute to the active site. Positions 7, 67, and 140 each coordinate Mg(2+).

It belongs to the RuvC family. In terms of assembly, homodimer which binds Holliday junction (HJ) DNA. The HJ becomes 2-fold symmetrical on binding to RuvC with unstacked arms; it has a different conformation from HJ DNA in complex with RuvA. In the full resolvosome a probable DNA-RuvA(4)-RuvB(12)-RuvC(2) complex forms which resolves the HJ. The cofactor is Mg(2+).

The protein resides in the cytoplasm. The catalysed reaction is Endonucleolytic cleavage at a junction such as a reciprocal single-stranded crossover between two homologous DNA duplexes (Holliday junction).. Functionally, the RuvA-RuvB-RuvC complex processes Holliday junction (HJ) DNA during genetic recombination and DNA repair. Endonuclease that resolves HJ intermediates. Cleaves cruciform DNA by making single-stranded nicks across the HJ at symmetrical positions within the homologous arms, yielding a 5'-phosphate and a 3'-hydroxyl group; requires a central core of homology in the junction. The consensus cleavage sequence is 5'-(A/T)TT(C/G)-3'. Cleavage occurs on the 3'-side of the TT dinucleotide at the point of strand exchange. HJ branch migration catalyzed by RuvA-RuvB allows RuvC to scan DNA until it finds its consensus sequence, where it cleaves and resolves the cruciform DNA. The chain is Crossover junction endodeoxyribonuclease RuvC from Thermotoga petrophila (strain ATCC BAA-488 / DSM 13995 / JCM 10881 / RKU-1).